The chain runs to 622 residues: Polypeptide N-acetylgalactosaminyltransferase 6 (622 aa).

The Cytoplasmic segment spans residues 1–8 (MRLLRRRH). A helical; Signal-anchor for type II membrane protein transmembrane segment spans residues 9–28 (MSLRLAMLGSVFMLFLFIRQ). The Lumenal portion of the chain corresponds to 29-622 (KDVSNQEQAM…RDPYQLWLFV (594 aa)). Asparagine 86 is a glycosylation site (N-linked (GlcNAc...) asparagine). The tract at residues 176-285 (LPTTSVIIVF…HGWLEPLLAR (110 aa)) is catalytic subdomain A. 3 residues coordinate Mn(2+): aspartate 269, histidine 271, and histidine 407. The catalytic subdomain B stretch occupies residues 348–410 (PIKSPTFAGG…PCSVVGHVFR (63 aa)). A glycan (N-linked (GlcNAc...) asparagine) is linked at asparagine 476. A Ricin B-type lectin domain is found at 506–622 (TNQCLDVGEN…RDPYQLWLFV (117 aa)). A disulfide bridge connects residues cysteine 509 and cysteine 527. Residues aspartate 511, glutamate 514, histidine 528, and asparagine 533 each coordinate UDP-N-acetyl-alpha-D-galactosamine. Cystine bridges form between cysteine 553-cysteine 566 and cysteine 597-cysteine 610.

Belongs to the glycosyltransferase 2 family. GalNAc-T subfamily. It depends on Mn(2+) as a cofactor.

It localises to the golgi apparatus membrane. The catalysed reaction is L-seryl-[protein] + UDP-N-acetyl-alpha-D-galactosamine = a 3-O-[N-acetyl-alpha-D-galactosaminyl]-L-seryl-[protein] + UDP + H(+). It carries out the reaction L-threonyl-[protein] + UDP-N-acetyl-alpha-D-galactosamine = a 3-O-[N-acetyl-alpha-D-galactosaminyl]-L-threonyl-[protein] + UDP + H(+). Its pathway is protein modification; protein glycosylation. Catalyzes the initial reaction in O-linked oligosaccharide biosynthesis, the transfer of an N-acetyl-D-galactosamine residue to a serine or threonine residue on the protein receptor. May participate in synthesis of oncofetal fibronectin. Has activity toward Muc1a, Muc2, EA2 and fibronectin peptides. The chain is Polypeptide N-acetylgalactosaminyltransferase 6 (Galnt6) from Mus musculus (Mouse).